Here is a 78-residue protein sequence, read N- to C-terminus: Defensin-like protein (78 aa).

An N-terminal signal peptide occupies residues 1–31; the sequence is MGRSIRLFATFFLIAMLFLSTEMGPMTSAEA. Cystine bridges form between Cys34–Cys78, Cys45–Cys65, Cys51–Cys72, and Cys55–Cys74.

The protein belongs to the DEFL family. In terms of tissue distribution, predominantly expressed in the pistil during all stages of flower development.

It localises to the secreted. In terms of biological role, may be involved in the defense of the pistil against pathogen infection. This chain is Defensin-like protein, found in Petunia integrifolia (Violet-flowered petunia).